The sequence spans 64 residues: Large ribosomal subunit protein bL35 (64 aa).

The segment covering 1–28 (MSKAKTHSGAAKRFKKTASGYKHKHAFK) has biased composition (basic residues). Residues 1-51 (MSKAKTHSGAAKRFKKTASGYKHKHAFKSHILTKMTTKRKRQLRGTSLLNA) form a disordered region.

The protein belongs to the bacterial ribosomal protein bL35 family.

In Saccharophagus degradans (strain 2-40 / ATCC 43961 / DSM 17024), this protein is Large ribosomal subunit protein bL35.